The following is a 125-amino-acid chain: Oxytocin-neurophysin 1 (125 aa).

Residues 1 to 19 (MAGPSLACCLLGLLALTSA) form the signal peptide. Cysteines 20 and 25 form a disulfide. Gly-28 is subject to Glycine amide. 7 disulfide bridges follow: Cys-41–Cys-85, Cys-44–Cys-58, Cys-52–Cys-75, Cys-59–Cys-65, Cys-92–Cys-104, Cys-98–Cys-116, and Cys-105–Cys-110.

This sequence belongs to the vasopressin/oxytocin family. In terms of assembly, interacts with oxytocin receptor (Ki=1.5 nM). Interacts with vasopressin V1aR/AVPR1A (Ki=37 nM), V1bR/AVPR1B (Ki=222 nM), and V2R/AVPR2 receptors (Ki=823 nM).

Functionally, neurophysin 1 specifically binds oxytocin. Oxytocin causes contraction of the smooth muscle of the uterus and of the mammary gland. Acts by binding to oxytocin receptor (OXTR). This is Oxytocin-neurophysin 1 (OXT) from Sus scrofa (Pig).